Reading from the N-terminus, the 466-residue chain is Ribulose bisphosphate carboxylase large chain (466 aa).

Lys4 carries the post-translational modification N6,N6,N6-trimethyllysine. Asn113 and Thr163 together coordinate substrate. Lys165 (proton acceptor) is an active-site residue. Lys167 is a binding site for substrate. Mg(2+) is bound by residues Lys191, Asp193, and Glu194. Lys191 bears the N6-carboxylysine mark. The Proton acceptor role is filled by His284. Substrate is bound by residues Arg285, His317, and Ser369.

It belongs to the RuBisCO large chain family. Type I subfamily. Heterohexadecamer of 8 large chains and 8 small chains; disulfide-linked. The disulfide link is formed within the large subunit homodimers. Requires Mg(2+) as cofactor. Post-translationally, the disulfide bond which can form in the large chain dimeric partners within the hexadecamer appears to be associated with oxidative stress and protein turnover.

It is found in the plastid. It localises to the chloroplast. It carries out the reaction 2 (2R)-3-phosphoglycerate + 2 H(+) = D-ribulose 1,5-bisphosphate + CO2 + H2O. The catalysed reaction is D-ribulose 1,5-bisphosphate + O2 = 2-phosphoglycolate + (2R)-3-phosphoglycerate + 2 H(+). RuBisCO catalyzes two reactions: the carboxylation of D-ribulose 1,5-bisphosphate, the primary event in carbon dioxide fixation, as well as the oxidative fragmentation of the pentose substrate in the photorespiration process. Both reactions occur simultaneously and in competition at the same active site. In Ruttya fruticosa (African azalea), this protein is Ribulose bisphosphate carboxylase large chain.